A 240-amino-acid polypeptide reads, in one-letter code: MATTWPPCRIIRKSGGLRGMWTLEYELQRSGLGPVAGVDEVGRGACAGPLVVAACVLGPGRLEESLDDSKKLSAKGREMLFPLICRYALAYHVVFIPSVEVDRHGVQVANIEGMRRAVAGLSVRPGYVLSDGFRVPGLSVPSLPVVGGDAVVACIAAASVLAKVSRDRLMVAMDADYPGYGFAAHKGYCTRAHSLALTQLGPCPEHRYSFINVRRIVTRSNTRAVAGFTPAPPAEHGECR.

The RNase H type-2 domain occupies 33–222; sequence GPVAGVDEVG…VRRIVTRSNT (190 aa). Residues Asp-39, Glu-40, and Asp-131 each coordinate a divalent metal cation.

It belongs to the RNase HII family. Requires Mn(2+) as cofactor. Mg(2+) serves as cofactor.

It is found in the cytoplasm. The enzyme catalyses Endonucleolytic cleavage to 5'-phosphomonoester.. In terms of biological role, endonuclease that specifically degrades the RNA of RNA-DNA hybrids. This is Ribonuclease HII from Mycobacterium leprae (strain Br4923).